We begin with the raw amino-acid sequence, 161 residues long: MPSFDTVSEANMVEVKNAVDQAGKEISTRFDFKGSDARVEQKDRDLTAYADSEFQLNQVLDVLTGKLVKRNVDVRFLDRGKIEKIGGDKVKQVIKIKNGIETEAAKKIVRIIKDSKMKVQASIQGDAVRVTGAKRDDLQAAMAMLRKEVADLPLEFNNFRD.

Belongs to the YajQ family.

Its function is as follows. Nucleotide-binding protein. This Janthinobacterium sp. (strain Marseille) (Minibacterium massiliensis) protein is Nucleotide-binding protein mma_0840.